A 454-amino-acid polypeptide reads, in one-letter code: Mitochondrial distribution and morphology protein 10 (454 aa).

The protein belongs to the MDM10 family. In terms of assembly, component of the ER-mitochondria encounter structure (ERMES) or MDM complex, composed of MMM1, MDM10, MDM12 and MDM34. Associates with the mitochondrial outer membrane sorting assembly machinery SAM(core) complex.

The protein localises to the mitochondrion outer membrane. Its function is as follows. Component of the ERMES/MDM complex, which serves as a molecular tether to connect the endoplasmic reticulum and mitochondria. Components of this complex are involved in the control of mitochondrial shape and protein biogenesis and may function in phospholipid exchange. MDM10 is involved in the late assembly steps of the general translocase of the mitochondrial outer membrane (TOM complex). Functions in the TOM40-specific route of the assembly of outer membrane beta-barrel proteins, including the association of TOM40 with the receptor TOM22 and small TOM proteins. Can associate with the SAM(core) complex as well as the MDM12-MMM1 complex, both involved in late steps of the major beta-barrel assembly pathway, that is responsible for biogenesis of all outer membrane beta-barrel proteins. May act as a switch that shuttles between both complexes and channels precursor proteins into the TOM40-specific pathway. Plays a role in mitochondrial morphology and in the inheritance of mitochondria. The sequence is that of Mitochondrial distribution and morphology protein 10 from Candida tropicalis (strain ATCC MYA-3404 / T1) (Yeast).